We begin with the raw amino-acid sequence, 297 residues long: Carbamate kinase (297 aa).

This sequence belongs to the carbamate kinase family.

The protein localises to the cytoplasm. The enzyme catalyses hydrogencarbonate + NH4(+) + ATP = carbamoyl phosphate + ADP + H2O + H(+). It carries out the reaction carbamate + ATP = carbamoyl phosphate + ADP. The catalysed reaction is hydrogencarbonate + NH4(+) = carbamate + H2O + H(+). It participates in nitrogen metabolism; (S)-allantoin degradation. Its function is as follows. Kinase involved in the anaerobic nitrogen utilization via the assimilation of allantoin. Catalyzes the transfer of a phosphate group from carbamoyl phosphate to ADP to produce ATP and leave carbamate, which spontaneously hydrolyzes to ammonia and hydrogencarbonate. In Escherichia coli O6:H1 (strain CFT073 / ATCC 700928 / UPEC), this protein is Carbamate kinase.